Here is a 134-residue protein sequence, read N- to C-terminus: Biopolymer transport protein exbD2 (134 aa).

Residues 1-17 are Cytoplasmic-facing; that stretch reads MRLGRRTSKQEEAQIDL. The helical transmembrane segment at 18–38 threads the bilayer; sequence TSMLDIVFIMLIFFIVTSSFV. At 39-134 the chain is on the periplasmic side; it reads RESGVEVNRP…KSIALAAEKP (96 aa).

This sequence belongs to the ExbD/TolR family. In terms of assembly, the accessory proteins ExbB and ExbD seem to form a complex with TonB.

Its subcellular location is the cell inner membrane. In terms of biological role, involved in the TonB-dependent energy-dependent transport of various receptor-bound substrates. In Vibrio cholerae serotype O1 (strain ATCC 39315 / El Tor Inaba N16961), this protein is Biopolymer transport protein exbD2 (exbD2).